The following is a 252-amino-acid chain: MSLPATFDLTPEDAQLLLAANTHLGARNVQVHQEPYVFNTRPDGVNVINVGKTWEKIVLAARIIAAIPNPEDVCAISSRTYGQRAVLKFSAHTGATPIAGRFTPGSFTNYITRSFKEPRLIIVTDPRSDFQAIKEASYVNIPVIALTDLDSPSEYVDVAIPCNNRGKHSIGLVWYLLAREVLRLRGALVDRTQPWAIMPDLYFYRNPEEVEQQAAEETTSTGADAEESKEEVAEGQNEASEWAEENTEAVSW.

Serine 2 is modified (N-acetylserine). A disordered region spans residues 209–252 (EVEQQAAEETTSTGADAEESKEEVAEGQNEASEWAEENTEAVSW). The span at 241–252 (EWAEENTEAVSW) shows a compositional bias: acidic residues.

This sequence belongs to the universal ribosomal protein uS2 family. Component of the small ribosomal subunit. Mature ribosomes consist of a small (40S) and a large (60S) subunit. The 40S subunit contains about 33 different proteins and 1 molecule of RNA (18S). The 60S subunit contains about 49 different proteins and 3 molecules of RNA (25S, 5.8S and 5S). Interacts with RPS21.

Its subcellular location is the cytoplasm. In terms of biological role, required for the assembly and/or stability of the 40S ribosomal subunit. Required for the processing of the 20S rRNA-precursor to mature 18S rRNA in a late step of the maturation of 40S ribosomal subunits. The polypeptide is Small ribosomal subunit protein uS2A (Vanderwaltozyma polyspora (strain ATCC 22028 / DSM 70294 / BCRC 21397 / CBS 2163 / NBRC 10782 / NRRL Y-8283 / UCD 57-17) (Kluyveromyces polysporus)).